A 573-amino-acid chain; its full sequence is 2-succinyl-5-enolpyruvyl-6-hydroxy-3-cyclohexene-1-carboxylate synthase (573 aa).

The protein belongs to the TPP enzyme family. MenD subfamily. In terms of assembly, homodimer. Mg(2+) is required as a cofactor. The cofactor is Mn(2+). Thiamine diphosphate serves as cofactor.

It carries out the reaction isochorismate + 2-oxoglutarate + H(+) = 5-enolpyruvoyl-6-hydroxy-2-succinyl-cyclohex-3-ene-1-carboxylate + CO2. The protein operates within quinol/quinone metabolism; 1,4-dihydroxy-2-naphthoate biosynthesis; 1,4-dihydroxy-2-naphthoate from chorismate: step 2/7. Its pathway is quinol/quinone metabolism; menaquinone biosynthesis. In terms of biological role, catalyzes the thiamine diphosphate-dependent decarboxylation of 2-oxoglutarate and the subsequent addition of the resulting succinic semialdehyde-thiamine pyrophosphate anion to isochorismate to yield 2-succinyl-5-enolpyruvyl-6-hydroxy-3-cyclohexene-1-carboxylate (SEPHCHC). This is 2-succinyl-5-enolpyruvyl-6-hydroxy-3-cyclohexene-1-carboxylate synthase from Shewanella sp. (strain ANA-3).